Here is a 92-residue protein sequence, read N- to C-terminus: Small ribosomal subunit protein uS19 (92 aa).

It belongs to the universal ribosomal protein uS19 family.

Protein S19 forms a complex with S13 that binds strongly to the 16S ribosomal RNA. This Novosphingobium aromaticivorans (strain ATCC 700278 / DSM 12444 / CCUG 56034 / CIP 105152 / NBRC 16084 / F199) protein is Small ribosomal subunit protein uS19.